A 76-amino-acid polypeptide reads, in one-letter code: Theta defensin subunit C (76 aa).

The signal sequence occupies residues 1 to 22 (MRTFAFLTAMLLLVALHAQAEA). Positions 23–64 (RQARADEAAIQEQPGADDQGMAHSFTRNESAVLPLSESERGL) are excised as a propeptide. Arg-65 is covalently cross-linked (Cyclopeptide (Arg-Cys) (interchain with C-73 in subunit A); in form BTD-4). The cysteines at positions 68 and 73 are disulfide-linked. Residue Cys-73 forms a Cyclopeptide (Cys-Arg) (interchain with R-65 in subunit A); in form BTD-4 linkage. The propeptide occupies 74–76 (RLL).

It belongs to the alpha-defensin family. Theta subfamily. In terms of assembly, BTD-4 is a cyclic heterodimer composed of subunits A and C; disulfide-linked. Forms a cyclic peptide with subunit A (BTD-4). An additional intersubunit disulfide bond is formed.

In terms of biological role, BTD-4 has antimicrobial activity against the Gram-negative bacterium E.coli ML35, the Gram-positive bacterium S.aureus 502a, and the fungus C.albicans 16820. The protein is Theta defensin subunit C (BTDC) of Papio anubis (Olive baboon).